We begin with the raw amino-acid sequence, 951 residues long: Zinc fingers and homeoboxes protein 3 (951 aa).

The segment at 1–66 is disordered; it reads MASKRKSTTP…SSTDGSALAN (66 aa). Residues 42–58 show a composition bias toward low complexity; it reads PSEAPEASSEAAPNPSS. 2 C2H2-type zinc fingers span residues 77–100 and 109–132; these read YSCK…TSEH and FVCT…AKCH. The interval 198–249 is disordered; the sequence is KENAPTQPGGEALPKPLAGETEGKEGDHTFINGATPVSQASANSTKPPHTAN. Over residues 232–244 the composition is skewed to polar residues; it reads TPVSQASANSTKP. Positions 237-481 are required for homodimerization and interaction with NFYA; it reads ASANSTKPPH…LLTACPSITS (245 aa). The interval 297–495 is required for repressor activity; sequence LSSIPTYNAA…DANIYKNKKS (199 aa). 2 DNA-binding regions (homeobox) span residues 298 to 357 and 487 to 546; these read SSIP…GISW and ANIY…RNLK. A required for nuclear localization region spans residues 490–548; sequence YKNKKSHEQLSALKGSFCRNQFPGQSEVEHLTKVTGLSTREVRKWFSDRRYHCRNLKGT. A Phosphoserine modification is found at serine 597. A DNA-binding region (homeobox 3) is located at residues 605 to 664; that stretch reads TPTKYKERAPEQLRVLESSFAQNPLPPEEELDRLRSETKMTRREIDGWFSERRKRVNAEE. Disordered regions lie at residues 621 to 642 and 661 to 702; these read ESSF…RSET and NAEE…NGSS. Positions 661-674 are enriched in basic and acidic residues; the sequence is NAEETKKADGHAPQ. The span at 675–690 shows a compositional bias: acidic residues; that stretch reads EEAEGAEEEGRDEELA. A phosphoserine mark is found at serine 701 and serine 716. 2 DNA-binding regions (homeobox) span residues 759–818 and 830–889; these read PSRV…KNGQ and FPPG…TRAV. Positions 885–951 are disordered; that stretch reads ETRAVADTSS…PQSGRQLETD (67 aa). A phosphoserine mark is found at serine 922 and serine 941. Residues 937–951 show a composition bias toward polar residues; that stretch reads FDTSSPQSGRQLETD.

It belongs to the ZHX family. In terms of assembly, homodimer (via homeobox domain 1). Heterodimer with ZHX1 (via homeobox domain 1). Heterodimer with ZHX2 (via homeobox domain 1). Heterodimerization with ZHX1 is a prerequisite for repressor activity. Interacts with NFYA. In terms of tissue distribution, widely expressed.

The protein resides in the cytoplasm. It localises to the nucleus. Its function is as follows. Acts as a transcriptional repressor. Involved in the early stages of mesenchymal stem cell (MSC) osteogenic differentiation. Is a regulator of podocyte gene expression during primary glomerula disease. Binds to promoter DNA. The sequence is that of Zinc fingers and homeoboxes protein 3 (Zhx3) from Rattus norvegicus (Rat).